The following is a 654-amino-acid chain: Tetracycline resistance protein TetQ (654 aa).

Positions 1–244 constitute a tr-type G domain; it reads MNIINLGILA…AISSFILPPE (244 aa). Residues 10–17, 74–78, and 128–131 each bind GTP; these read AHIDAGKT, DTPGH, and NKID.

It belongs to the TRAFAC class translation factor GTPase superfamily. Classic translation factor GTPase family. TetM/TetO subfamily.

Functionally, abolishes the inhibitory effect of tetracyclin on protein synthesis by a non-covalent modification of the ribosomes. This Prevotella intermedia protein is Tetracycline resistance protein TetQ (tetQ).